The sequence spans 467 residues: Cysteine--tRNA ligase (467 aa).

A Zn(2+)-binding site is contributed by Cys27. The 'HIGH' region signature appears at 29-39 (PTVYNYIHIGN). The Zn(2+) site is built by Cys207, His232, and Glu236. The 'KMSKS' region signature appears at 264 to 268 (KMSKS). Position 267 (Lys267) interacts with ATP.

It belongs to the class-I aminoacyl-tRNA synthetase family. Monomer. Zn(2+) is required as a cofactor.

It localises to the cytoplasm. The catalysed reaction is tRNA(Cys) + L-cysteine + ATP = L-cysteinyl-tRNA(Cys) + AMP + diphosphate. The polypeptide is Cysteine--tRNA ligase (Caldanaerobacter subterraneus subsp. tengcongensis (strain DSM 15242 / JCM 11007 / NBRC 100824 / MB4) (Thermoanaerobacter tengcongensis)).